The primary structure comprises 489 residues: Rhamnulokinase (489 aa).

Position 13–17 (13–17 (ASSGR)) interacts with ATP. An intrachain disulfide couples Cys-68 to Cys-222. Substrate is bound by residues Gly-83 and 236–238 (HDT). The active-site Proton acceptor is the Asp-237. Thr-259 is a binding site for ATP. A substrate-binding site is contributed by Asn-296. Gln-304 is a binding site for ATP. Residues Cys-353 and Cys-370 are joined by a disulfide bond. An ATP-binding site is contributed by Gly-402. Cys-413 and Cys-417 are joined by a disulfide.

It belongs to the rhamnulokinase family. Mg(2+) is required as a cofactor.

The catalysed reaction is L-rhamnulose + ATP = L-rhamnulose 1-phosphate + ADP + H(+). It participates in carbohydrate degradation; L-rhamnose degradation; glycerone phosphate from L-rhamnose: step 2/3. In terms of biological role, involved in the catabolism of L-rhamnose (6-deoxy-L-mannose). Catalyzes the transfer of the gamma-phosphate group from ATP to the 1-hydroxyl group of L-rhamnulose to yield L-rhamnulose 1-phosphate. This is Rhamnulokinase from Salmonella typhi.